The primary structure comprises 466 residues: Uronate isomerase (466 aa).

This sequence belongs to the metallo-dependent hydrolases superfamily. Uronate isomerase family.

It carries out the reaction D-glucuronate = D-fructuronate. It catalyses the reaction aldehydo-D-galacturonate = keto-D-tagaturonate. Its pathway is carbohydrate metabolism; pentose and glucuronate interconversion. This chain is Uronate isomerase, found in Clostridium perfringens (strain 13 / Type A).